Here is a 1300-residue protein sequence, read N- to C-terminus: Histone-lysine N-methyltransferase Suv4-20 (1300 aa).

The interval 1 to 136 (MVVGSNHTRR…GSGSVVSGLN (136 aa)) is disordered. The segment covering 14-62 (GSRFTNSSSSSSTSGGPTASASSTTSVTSSLATNSTSTSTAAALLSSMS) has biased composition (low complexity). The span at 79-97 (QTNQQHHQVAHSQPHATHY) shows a compositional bias: polar residues. The segment covering 116–128 (GSGGGSAGSGSGS) has biased composition (gly residues). The SET domain maps to 255 to 366 (EACYRYTLEE…VGEEITCFYG (112 aa)). 5 disordered regions span residues 432 to 490 (SRAN…GKEA), 535 to 574 (QQHH…QQMA), 669 to 744 (HQSQ…SAGR), 756 to 856 (NNNI…TQGI), and 891 to 927 (ALGG…VEPL). Positions 435-451 (NSTNSTSNSNSNTNDST) are enriched in low complexity. Over residues 452–462 (GPSETSSTNGL) the composition is skewed to polar residues. Basic residues predominate over residues 536-557 (QHHHQHHFHHHHHHHHHHHNHG). Positions 564–574 (AEATAAVQQMA) are enriched in low complexity. Basic and acidic residues-rich tracts occupy residues 677-688 (RRSERQKEKLTD), 698-707 (QQKKEQKQQD), and 722-735 (QPEK…EQQK). Positions 756–821 (NNNIATTTNS…SSIPSSTSSE (66 aa)) are enriched in low complexity. 2 stretches are compositionally biased toward polar residues: residues 822-834 (NQQQ…SCSP) and 911-923 (EPTT…TISN). Residues Ser-831 and Ser-833 each carry the phosphoserine modification. At Thr-930 the chain carries Phosphothreonine. Disordered stretches follow at residues 956–988 (SLSN…NLTG), 1006–1188 (EHGN…PNGK), 1212–1233 (SPGQ…GGSG), and 1263–1300 (QISQ…HGQK). Positions 1009–1029 (NDDDEDEEEDDEEPAAEEEEE) are enriched in acidic residues. Residues 1041–1055 (KKQRKKQRSRSRSSQ) show a composition bias toward basic residues. 2 stretches are compositionally biased toward low complexity: residues 1117–1145 (ASST…STSA) and 1161–1178 (SPSS…TSTT). A compositionally biased stretch (basic residues) spans 1289-1300 (SHHHTNNHHGQK).

The protein belongs to the class V-like SAM-binding methyltransferase superfamily. Histone-lysine methyltransferase family. Suvar4-20 subfamily.

Its subcellular location is the nucleus. The protein localises to the chromosome. It catalyses the reaction L-lysyl(20)-[histone H4] + S-adenosyl-L-methionine = N(6)-methyl-L-lysyl(20)-[histone H4] + S-adenosyl-L-homocysteine + H(+). The catalysed reaction is N(6)-methyl-L-lysyl(20)-[histone H4] + S-adenosyl-L-methionine = N(6),N(6)-dimethyl-L-lysyl(20)-[histone H4] + S-adenosyl-L-homocysteine + H(+). It carries out the reaction N(6),N(6)-dimethyl-L-lysyl(20)-[histone H4] + S-adenosyl-L-methionine = N(6),N(6),N(6)-trimethyl-L-lysyl(20)-[histone H4] + S-adenosyl-L-homocysteine + H(+). Histone methyltransferase that specifically trimethylates 'Lys-20' of histone H4. H4 'Lys-20' trimethylation represents a specific tag for epigenetic transcriptional repression. Mainly functions in pericentric heterochromatin regions, thereby playing a central role in the establishment of constitutive heterochromatin in these regions. Acts as a dominant suppressor of position-effect variegation. This is Histone-lysine N-methyltransferase Suv4-20 (Hmt4-20) from Drosophila melanogaster (Fruit fly).